The sequence spans 276 residues: Type II pantothenate kinase (276 aa).

Position 8–15 (8–15) interacts with ATP; that stretch reads DAGGTLTK. The Proton acceptor role is filled by Glu-76. Residues Thr-105, 127-131, Phe-143, and Ser-230 contribute to the ATP site; that span reads GGTIM.

Belongs to the type II pantothenate kinase family. As to quaternary structure, homodimer.

Its subcellular location is the cytoplasm. It carries out the reaction (R)-pantothenate + ATP = (R)-4'-phosphopantothenate + ADP + H(+). Its pathway is cofactor biosynthesis; coenzyme A biosynthesis; CoA from (R)-pantothenate: step 1/5. Catalyzes the phosphorylation of pantothenate (Pan), the first step in CoA biosynthesis. The polypeptide is Type II pantothenate kinase (Bacillus cereus (strain AH820)).